We begin with the raw amino-acid sequence, 433 residues long: MMICLVFLCVLTLARGEIYPPICPAPGVGNDEAVRAGELLLEISAYRNQRSGRVELWGSAAVNNQVFYGGMENSQIDYDFGKFLVFRCFQVFNNVHKLLFNTVSSATMHLARKRVQKCGHGKMTFISIQVQCSVNKKSIRLSRMSEASLKKQVLRVAFFLDRNNNSWIADKNFQGEDRTMLRLWNELSTYQQYLISSCNNDVKILSELYGEFRQIALPYDEKLNLNFMPVIRSSSERLFRADDLKCSFSRWLGAEGEFAVCEYSGWGVSRLGKIEIFAEKPLTFDMAWKTVKMRSSGAYTSLFRDDVTWGLIPLDKWVGDKYFCMCTNKESGDNVIVTLPEKNVEKSIQIYDEGSAMLSFAEMTSIILNLMFMGAVAVSVGILGISCFVGLKEIIYFIFVSVDYMWPFCDTLLTTAVNCFFKGRTFLRRELKI.

Topologically, residues 1–364 (MMICLVFLCV…SAMLSFAEMT (364 aa)) are lumenal. N-linked (GlcNAc...) asparagine; by host glycosylation is present at N164. A helical membrane pass occupies residues 365 to 385 (SIILNLMFMGAVAVSVGILGI). The Cytoplasmic segment spans residues 386–433 (SCFVGLKEIIYFIFVSVDYMWPFCDTLLTTAVNCFFKGRTFLRRELKI).

This sequence belongs to the herpesviruses U21 family.

The protein localises to the host endoplasmic reticulum membrane. It localises to the host lysosome membrane. Its function is as follows. Plays a role in escape from immune detection by associating with and diverting properly folded class I MHC molecules to an endolysosomal compartment, effectively removing them from the cell surface. In consequence, surface class I molecules are down-regulated and infected cells are masked for immune recognition by cytotoxic T lymphocytes. Also plays a role in the down-regulation of the host stress-induced NKG2D ligand UBPL3, which enables immune cells expressing the NKG2D receptor to recognize and annihilate infected cells prior to viral spread. This is Glycoprotein U21 (U21) from Homo sapiens (Human).